The sequence spans 920 residues: DNA ligase (920 aa).

Residues 90-94 (DAAYD), 139-140 (SL), and Glu-173 each bind NAD(+). Residue Lys-175 is the N6-AMP-lysine intermediate of the active site. Positions 196, 235, 360, and 384 each coordinate NAD(+). Zn(2+) is bound by residues Cys-481, Cys-484, Cys-500, and Cys-506. Residues 659–691 (RAQGEAAIESAETQGDTASETTGAPTGAEAPLG) are disordered. Polar residues predominate over residues 669–682 (AETQGDTASETTGA). One can recognise a BRCT domain in the interval 839-920 (SLPQTLAGKT…FAQLLATGTI (82 aa)).

It belongs to the NAD-dependent DNA ligase family. LigA subfamily. It depends on Mg(2+) as a cofactor. Mn(2+) is required as a cofactor.

The catalysed reaction is NAD(+) + (deoxyribonucleotide)n-3'-hydroxyl + 5'-phospho-(deoxyribonucleotide)m = (deoxyribonucleotide)n+m + AMP + beta-nicotinamide D-nucleotide.. Functionally, DNA ligase that catalyzes the formation of phosphodiester linkages between 5'-phosphoryl and 3'-hydroxyl groups in double-stranded DNA using NAD as a coenzyme and as the energy source for the reaction. It is essential for DNA replication and repair of damaged DNA. The protein is DNA ligase of Bifidobacterium longum (strain NCC 2705).